The chain runs to 59 residues: Large ribosomal subunit protein uL30 (59 aa).

Belongs to the universal ribosomal protein uL30 family. As to quaternary structure, part of the 50S ribosomal subunit.

This Staphylococcus aureus (strain JH1) protein is Large ribosomal subunit protein uL30.